Reading from the N-terminus, the 360-residue chain is Serine/threonine-protein kinase SAPK4 (360 aa).

The Protein kinase domain maps to 4–260 (YEAVRDIGSG…MKEIKSHPWF (257 aa)). Residues 10-18 (IGSGNFGVA) and Lys-33 contribute to the ATP site. Catalysis depends on Asp-123, which acts as the Proton acceptor. The interval 303 to 360 (TMPKSSRTGYWSDAGSDEEEKEEEERPEENEEEEEDEYDKRVKEVHASGELRMSSLRI) is disordered. Acidic residues predominate over residues 317 to 339 (GSDEEEKEEEERPEENEEEEEDE). Over residues 340–351 (YDKRVKEVHASG) the composition is skewed to basic and acidic residues.

It belongs to the protein kinase superfamily. Ser/Thr protein kinase family. In terms of processing, may be phosphorylated. As to expression, expressed in leaf blades, leaf sheaths and roots. Expressed in shoots and roots of young seedlings.

The catalysed reaction is L-seryl-[protein] + ATP = O-phospho-L-seryl-[protein] + ADP + H(+). It catalyses the reaction L-threonyl-[protein] + ATP = O-phospho-L-threonyl-[protein] + ADP + H(+). With respect to regulation, activated by hyperosmotic stress. May play a role in signal transduction of hyperosmotic response. In Oryza sativa subsp. japonica (Rice), this protein is Serine/threonine-protein kinase SAPK4 (SAPK4).